The chain runs to 208 residues: Uracil phosphoribosyltransferase (208 aa).

5-phospho-alpha-D-ribose 1-diphosphate contacts are provided by residues R78, R103, and 130-138 (DPMLATGGS). Uracil-binding positions include I193 and 198 to 200 (GDA). Residue D199 coordinates 5-phospho-alpha-D-ribose 1-diphosphate.

The protein belongs to the UPRTase family. The cofactor is Mg(2+).

It carries out the reaction UMP + diphosphate = 5-phospho-alpha-D-ribose 1-diphosphate + uracil. Its pathway is pyrimidine metabolism; UMP biosynthesis via salvage pathway; UMP from uracil: step 1/1. Its activity is regulated as follows. Allosterically activated by GTP. Its function is as follows. Catalyzes the conversion of uracil and 5-phospho-alpha-D-ribose 1-diphosphate (PRPP) to UMP and diphosphate. This Pelobacter propionicus (strain DSM 2379 / NBRC 103807 / OttBd1) protein is Uracil phosphoribosyltransferase.